Here is an 841-residue protein sequence, read N- to C-terminus: Chitin synthase 1 (841 aa).

The span at 1–13 (MNPGQKQEHDQYP) shows a compositional bias: basic and acidic residues. The segment at 1–98 (MNPGQKQEHD…YGEAPRRQPR (98 aa)) is disordered. Residues 76-85 (PPQPMGPPSP) show a composition bias toward pro residues. 9 consecutive transmembrane segments (helical) span residues 302–322 (WFFQAFGPVINPNVCVLIDVG), 385–405 (SVFGYISVLPGAFSAYRFTAL), 526–546 (LIFSWFALGNFYLTFYILTSA), 564–584 (ILHTILNYIYILLIIVQFILA), 602–622 (FFAILMVYMMFATIWITVVGV), 644–664 (NIIISIVSTYAMYFIASFLFF), 673–693 (FIQYIFLSPSYTNILNIYAFC), 778–798 (VISWIISNLILVVLITNENIL), and 816–836 (LWSVAGLSAIRFCGSGLYLIF).

It belongs to the chitin synthase family.

It is found in the cell membrane. It catalyses the reaction [(1-&gt;4)-N-acetyl-beta-D-glucosaminyl](n) + UDP-N-acetyl-alpha-D-glucosamine = [(1-&gt;4)-N-acetyl-beta-D-glucosaminyl](n+1) + UDP + H(+). Polymerizes chitin, a structural polymer of the cell wall and septum, by transferring the sugar moiety of UDP-GlcNAc to the non-reducing end of the growing chitin polymer. The protein is Chitin synthase 1 (chs1) of Phycomyces blakesleeanus (strain ATCC 8743b / DSM 1359 / FGSC 10004 / NBRC 33097 / NRRL 1555).